The sequence spans 466 residues: uncharacterized protein (466 aa).

This sequence belongs to the myoviridae tail sheath protein family.

This is an uncharacterized protein from Bacillus subtilis (strain 168).